The following is a 208-amino-acid chain: Pyrophosphate-energized proton pump 2 (208 aa).

A run of 5 helical transmembrane segments spans residues 19 to 39, 54 to 74, 89 to 109, 140 to 160, and 167 to 187; these read AYPL…TFFV, GLIV…SFTI, GGNL…IVVI, LAVS…GIIA, and LFGT…IVAL.

It belongs to the H(+)-translocating pyrophosphatase (TC 3.A.10) family. Homodimer. Requires Mg(2+) as cofactor.

The protein localises to the cell inner membrane. The enzyme catalyses diphosphate + H2O + H(+)(in) = 2 phosphate + 2 H(+)(out). Its function is as follows. Proton pump that utilizes the energy of pyrophosphate hydrolysis as the driving force for proton movement across the membrane. Generates a proton motive force. In Mycoplana dimorpha, this protein is Pyrophosphate-energized proton pump 2 (hppA2).